The following is a 172-amino-acid chain: Adenine phosphoribosyltransferase (172 aa).

Belongs to the purine/pyrimidine phosphoribosyltransferase family. Homodimer.

The protein resides in the cytoplasm. It catalyses the reaction AMP + diphosphate = 5-phospho-alpha-D-ribose 1-diphosphate + adenine. It participates in purine metabolism; AMP biosynthesis via salvage pathway; AMP from adenine: step 1/1. Catalyzes a salvage reaction resulting in the formation of AMP, that is energically less costly than de novo synthesis. The polypeptide is Adenine phosphoribosyltransferase (Anaeromyxobacter dehalogenans (strain 2CP-C)).